A 439-amino-acid chain; its full sequence is Methylenetetrahydrofolate--tRNA-(uracil-5-)-methyltransferase TrmFO (439 aa).

G7 to G12 lines the FAD pocket.

Belongs to the MnmG family. TrmFO subfamily. The cofactor is FAD.

The protein localises to the cytoplasm. The enzyme catalyses uridine(54) in tRNA + (6R)-5,10-methylene-5,6,7,8-tetrahydrofolate + NADH + H(+) = 5-methyluridine(54) in tRNA + (6S)-5,6,7,8-tetrahydrofolate + NAD(+). The catalysed reaction is uridine(54) in tRNA + (6R)-5,10-methylene-5,6,7,8-tetrahydrofolate + NADPH + H(+) = 5-methyluridine(54) in tRNA + (6S)-5,6,7,8-tetrahydrofolate + NADP(+). Its function is as follows. Catalyzes the folate-dependent formation of 5-methyl-uridine at position 54 (M-5-U54) in all tRNAs. This Heliobacterium modesticaldum (strain ATCC 51547 / Ice1) protein is Methylenetetrahydrofolate--tRNA-(uracil-5-)-methyltransferase TrmFO.